The chain runs to 73 residues: UPF0270 protein PMI2817 (73 aa).

It belongs to the UPF0270 family.

The chain is UPF0270 protein PMI2817 from Proteus mirabilis (strain HI4320).